The chain runs to 217 residues: GTPase IMAP family member GIMD1 (217 aa).

An AIG1-type G domain is found at 6 to 217 (KMIINLALFG…ENCYQVLTFK (212 aa)). GTP-binding positions include 15–23 (GMTQSGKSS), S36, and 148–150 (HAE).

Belongs to the TRAFAC class TrmE-Era-EngA-EngB-Septin-like GTPase superfamily. AIG1/Toc34/Toc159-like paraseptin GTPase family. IAN subfamily.

This is GTPase IMAP family member GIMD1 (GIMD1) from Homo sapiens (Human).